The primary structure comprises 730 residues: Propionyl-CoA carboxylase alpha chain, mitochondrial (730 aa).

The N-terminal 52 residues, 1 to 52 (MAGLWVGGSVLVAAGRRGSRSPRPLMRSVALWTLKHVPQYSRQRLLVSRSLC), are a transit peptide targeting the mitochondrion. Residues 62 to 509 (TFDKILIANR…NTKFLSDVYP (448 aa)) enclose the Biotin carboxylation domain. At lysine 65 the chain carries N6-acetyllysine; alternate. Residue lysine 65 is modified to N6-succinyllysine; alternate. Lysine 119 carries the N6-succinyllysine modification. Lysine 150 is modified (N6-acetyllysine; alternate). Lysine 150 is subject to N6-succinyllysine; alternate. Lysine 154 is modified (N6-acetyllysine). Lysine 177 lines the ATP pocket. In terms of domain architecture, ATP-grasp spans 181–378 (KLLAKKAKVN…LVQEMIRVAK (198 aa)). Residue lysine 188 is modified to N6-succinyllysine. Position 200 is an N6-acetyllysine; alternate (lysine 200). N6-succinyllysine; alternate is present on lysine 200. Residues 209-270 (AREI…PRHI), glutamate 261, and asparagine 296 contribute to the ATP site. At serine 252 the chain carries Phosphoserine. Position 262 is an N6-succinyllysine (lysine 262). Positions 336, 349, and 351 each coordinate Mg(2+). The Mn(2+) site is built by glutamate 336, glutamate 349, and asparagine 351. Glutamate 349 is a catalytic residue. At lysine 407 the chain carries N6-succinyllysine. Biotin is bound at residue phenylalanine 409. Residues lysine 502, lysine 513, and lysine 650 each carry the N6-succinyllysine modification. Residues 655-730 (KAAEDTSSIL…GEGDLLVELE (76 aa)) form the Biotinyl-binding domain. Lysine 696 carries the N6-biotinyllysine modification.

In terms of assembly, the holoenzyme is a dodecamer composed of 6 PCCA/alpha subunits and 6 PCCB/beta subunits. Interacts (via the biotin carboxylation domain) with SIRT4. Interacts with SIRT3 and SIRT5. Mg(2+) serves as cofactor. Mn(2+) is required as a cofactor. The cofactor is biotin. Post-translationally, acetylated. In terms of processing, the biotin cofactor is covalently attached to the C-terminal biotinyl-binding domain and is required for the catalytic activity. Biotinylation is catalyzed by HLCS.

It is found in the mitochondrion matrix. The enzyme catalyses propanoyl-CoA + hydrogencarbonate + ATP = (S)-methylmalonyl-CoA + ADP + phosphate + H(+). It carries out the reaction butanoyl-CoA + hydrogencarbonate + ATP = (2S)-ethylmalonyl-CoA + ADP + phosphate + H(+). Its pathway is metabolic intermediate metabolism; propanoyl-CoA degradation; succinyl-CoA from propanoyl-CoA: step 1/3. In terms of biological role, this is one of the 2 subunits of the biotin-dependent propionyl-CoA carboxylase (PCC), a mitochondrial enzyme involved in the catabolism of odd chain fatty acids, branched-chain amino acids isoleucine, threonine, methionine, and valine and other metabolites. Propionyl-CoA carboxylase catalyzes the carboxylation of propionyl-CoA/propanoyl-CoA to D-methylmalonyl-CoA/(S)-methylmalonyl-CoA. Within the holoenzyme, the alpha subunit catalyzes the ATP-dependent carboxylation of the biotin carried by the biotin carboxyl carrier (BCC) domain, while the beta subunit then tranfers the carboxyl group from carboxylated biotin to propionyl-CoA. Propionyl-CoA carboxylase also significantly acts on butyryl-CoA/butanoyl-CoA, which is converted to ethylmalonyl-CoA/(2S)-ethylmalonyl-CoA at a much lower rate. Other alternative minor substrates include (2E)-butenoyl-CoA/crotonoyl-CoA. This Sus scrofa (Pig) protein is Propionyl-CoA carboxylase alpha chain, mitochondrial.